We begin with the raw amino-acid sequence, 63 residues long: Large ribosomal subunit protein bL33m (63 aa).

Belongs to the bacterial ribosomal protein bL33 family.

It is found in the mitochondrion. The chain is Large ribosomal subunit protein bL33m (mrpl33) from Dictyostelium discoideum (Social amoeba).